The following is a 697-amino-acid chain: Polyribonucleotide nucleotidyltransferase (697 aa).

2 residues coordinate Mg(2+): aspartate 484 and aspartate 490. The region spanning 551–610 is the KH domain; it reads PRITTIWVKTDKIRDVIGSGGKNIRGITEATGVSIDIEDSGRINIASTSKEACDKAIKMI. In terms of domain architecture, S1 motif spans 620-688; it reads GKLYMGTVKK…KQGKIKLSRK (69 aa).

It belongs to the polyribonucleotide nucleotidyltransferase family. The cofactor is Mg(2+).

It localises to the cytoplasm. It catalyses the reaction RNA(n+1) + phosphate = RNA(n) + a ribonucleoside 5'-diphosphate. Functionally, involved in mRNA degradation. Catalyzes the phosphorolysis of single-stranded polyribonucleotides processively in the 3'- to 5'-direction. The protein is Polyribonucleotide nucleotidyltransferase of Geobacter sulfurreducens (strain ATCC 51573 / DSM 12127 / PCA).